We begin with the raw amino-acid sequence, 819 residues long: Protein EFR3 homolog A (819 aa).

The tract at residues 210–230 is disordered; it reads DTDSRTGPPASPTTGDKEENP.

Belongs to the EFR3 family. Component of a phosphatidylinositol 4-kinase (PI4K) complex. Palmitoylated at its N-terminus, anchoring the protein to the plasma membrane.

The protein resides in the cell membrane. Component of a complex required to localize phosphatidylinositol 4-kinase (PI4K) to the plasma membrane. The complex acts as a regulator of phosphatidylinositol 4-phosphate (PtdIns(4)P) synthesis. In the complex, efr3a probably acts as the membrane-anchoring component. This chain is Protein EFR3 homolog A (efr3a), found in Xenopus laevis (African clawed frog).